The sequence spans 563 residues: BOS complex subunit NCLN (563 aa).

Positions 1–42 are cleaved as a signal peptide; the sequence is MLEEAGEVLENVLKASCLPLGFIVFLPAVLLLVAPPLPAADA. Topologically, residues 43 to 522 are lumenal; it reads AHEFTVYRMQ…VMNAYRVKPA (480 aa). N-linked (GlcNAc...) asparagine glycosylation is found at Asn241 and Asn428. A helical transmembrane segment spans residues 523-543; that stretch reads IFDLLLALCIGAYLGMAYTAV. Residues 544–563 lie on the Cytoplasmic side of the membrane; the sequence is QHFHVLYKTVQRLLLKAKAQ.

It belongs to the nicastrin family. As to quaternary structure, component of the back of Sec61 (BOS) complex, composed of NCLN/Nicalin, NOMO1 and TMEM147. The BOS complex is part of the multi-pass translocon (MPT) complex, composed of three subcomplexes, the GEL complex (composed of RAB5IF/OPTI and TMCO1), the BOS complex (composed of NCLN/Nicalin, NOMO1 and TMEM147) and the PAT complex (composed of WDR83OS/Asterix and CCDC47). The MPT complex associates with the SEC61 complex.

The protein resides in the endoplasmic reticulum membrane. Functionally, component of the multi-pass translocon (MPT) complex that mediates insertion of multi-pass membrane proteins into the lipid bilayer of membranes. The MPT complex takes over after the SEC61 complex: following membrane insertion of the first few transmembrane segments of proteins by the SEC61 complex, the MPT complex occludes the lateral gate of the SEC61 complex to promote insertion of subsequent transmembrane regions. May antagonize Nodal signaling and subsequent organization of axial structures during mesodermal patterning, via its interaction with NOMO. In Mus musculus (Mouse), this protein is BOS complex subunit NCLN (Ncln).